Consider the following 232-residue polypeptide: Dehydrogenase OXI1 (232 aa).

A signal peptide spans 1–20; the sequence is MTETFKVAITFVSPSSEALA. Leu19 is an NADP(+) binding site. The N-linked (GlcNAc...) asparagine glycan is linked to Asn28. NADP(+) contacts are provided by Asp42, Asn70, and Lys103. N-linked (GlcNAc...) asparagine glycosylation is present at Asn117. Active-site proton donor residues include Ser119 and Ser121. Tyr133, Lys137, and Thr168 together coordinate NADP(+). Tyr133 acts as the Proton acceptor in catalysis. Residue Lys137 is the Lowers pKa of active site Tyr of the active site.

This sequence belongs to the short-chain dehydrogenases/reductases (SDR) family.

It carries out the reaction a primary alcohol + NAD(+) = an aldehyde + NADH + H(+). The catalysed reaction is a secondary alcohol + NAD(+) = a ketone + NADH + H(+). It functions in the pathway mycotoxin biosynthesis. Its function is as follows. Dehydrogenase; part of the Tox1A locus, one of the 2 loci that mediate the biosynthesis of T-toxin, a family of linear polyketides 37 to 45 carbons in length, of which the major component is 41 carbons, and which leads to high virulence to maize. One of the PKSs (PKS1 or PKS2) could synthesize a precursor, used subsequently by the other PKS as starter unit, to add additional carbons. Variability in the length of the final carbon backbone C35-47 could be achieved by varying the number of condensation cycles, or use of different starter or extender units or might be due to decarboxylation of the penultimate product, catalyzed by DEC1. Additional proteins are required for the biosynthesis of T-toxin, including oxidoreductases RED1, RED2, RED3, LAM1 and OXI1, as well as esterase TOX9. The sequence is that of Dehydrogenase OXI1 from Cochliobolus heterostrophus (strain C4 / ATCC 48331 / race T) (Southern corn leaf blight fungus).